A 352-amino-acid polypeptide reads, in one-letter code: ER-derived vesicles protein ERV41 (352 aa).

Topologically, residues 1–23 (MAGLKTFDAFPKTEEQYKKKSTK) are cytoplasmic. Residues 24–44 (GGLTSLLTYLFLLFIAWTEFG) form a helical membrane-spanning segment. The Lumenal portion of the chain corresponds to 45-311 (EYFGGYIDQQ…FLVRLVAICS (267 aa)). A helical transmembrane segment spans residues 312 to 332 (FLVYCASWIFTLLDMALITIM). At 333–352 (GPKWSLRYQPDDKTKGILDR) the chain is on the cytoplasmic side. The Isoleucine-leucine motif motif lies at 349-350 (IL).

It belongs to the ERGIC family. Interacts with ERV46.

It is found in the endoplasmic reticulum membrane. The protein localises to the golgi apparatus membrane. Its subcellular location is the cytoplasmic vesicle. The protein resides in the COPII-coated vesicle membrane. Functionally, constituent of COPII-coated endoplasmic reticulum-derived transport vesicles. Required for efficient transport of a subset of secretory proteins to the Golgi. The C-terminal Ile-Leu motif is required for exit from the endoplasmic reticulum. Facilitates retrograde transport from the Golgi to the endoplasmic reticulum. This chain is ER-derived vesicles protein ERV41 (ERV41), found in Saccharomyces cerevisiae (strain ATCC 204508 / S288c) (Baker's yeast).